The following is a 697-amino-acid chain: tRNA 5-methylaminomethyl-2-thiouridine biosynthesis bifunctional protein MnmC (697 aa).

Positions 1 to 269 (MNKTPLLSVS…LRQQLQQQFA (269 aa)) are tRNA (mnm(5)s(2)U34)-methyltransferase. Residues 287 to 697 (IGGGIASASL…RKLLKGKALM (411 aa)) form an FAD-dependent cmnm(5)s(2)U34 oxidoreductase region.

In the N-terminal section; belongs to the methyltransferase superfamily. tRNA (mnm(5)s(2)U34)-methyltransferase family. The protein in the C-terminal section; belongs to the DAO family. FAD serves as cofactor.

Its subcellular location is the cytoplasm. The catalysed reaction is 5-aminomethyl-2-thiouridine(34) in tRNA + S-adenosyl-L-methionine = 5-methylaminomethyl-2-thiouridine(34) in tRNA + S-adenosyl-L-homocysteine + H(+). Its function is as follows. Catalyzes the last two steps in the biosynthesis of 5-methylaminomethyl-2-thiouridine (mnm(5)s(2)U) at the wobble position (U34) in tRNA. Catalyzes the FAD-dependent demodification of cmnm(5)s(2)U34 to nm(5)s(2)U34, followed by the transfer of a methyl group from S-adenosyl-L-methionine to nm(5)s(2)U34, to form mnm(5)s(2)U34. The sequence is that of tRNA 5-methylaminomethyl-2-thiouridine biosynthesis bifunctional protein MnmC from Shewanella frigidimarina (strain NCIMB 400).